The sequence spans 434 residues: Trehalose-phosphatase (434 aa).

D156 and D158 together coordinate Mg(2+). The active-site Proton donor/acceptor is the D158. Position 275 to 277 (275 to 277 (QKK)) interacts with substrate. D366 contributes to the Mg(2+) binding site.

This sequence belongs to the gob-1 trehalose phosphatase family. The cofactor is Mg(2+).

It catalyses the reaction alpha,alpha-trehalose 6-phosphate + H2O = alpha,alpha-trehalose + phosphate. In terms of biological role, catalyzes the hydrolysis of trehalose 6-phosphate to trehalose and phosphate; prevents the accumulation of toxic levels of trehalose 6-phosphate. The chain is Trehalose-phosphatase (gob-1) from Caenorhabditis briggsae.